A 430-amino-acid polypeptide reads, in one-letter code: Histidine--tRNA ligase (430 aa).

Belongs to the class-II aminoacyl-tRNA synthetase family. As to quaternary structure, homodimer.

Its subcellular location is the cytoplasm. The catalysed reaction is tRNA(His) + L-histidine + ATP = L-histidyl-tRNA(His) + AMP + diphosphate + H(+). The polypeptide is Histidine--tRNA ligase (Lactococcus lactis subsp. cremoris (strain SK11)).